The primary structure comprises 208 residues: Imidazoleglycerol-phosphate dehydratase (208 aa).

The protein belongs to the imidazoleglycerol-phosphate dehydratase family.

It localises to the cytoplasm. The enzyme catalyses D-erythro-1-(imidazol-4-yl)glycerol 3-phosphate = 3-(imidazol-4-yl)-2-oxopropyl phosphate + H2O. The protein operates within amino-acid biosynthesis; L-histidine biosynthesis; L-histidine from 5-phospho-alpha-D-ribose 1-diphosphate: step 6/9. This chain is Imidazoleglycerol-phosphate dehydratase, found in Paenarthrobacter aurescens (strain TC1).